The following is a 256-amino-acid chain: Hemin import ATP-binding protein HmuV (256 aa).

Residues 2–239 form the ABC transporter domain; it reads IHAFAVSVIR…ANVREVYQVD (238 aa). 34 to 41 contacts ATP; it reads GPNGAGKS.

This sequence belongs to the ABC transporter superfamily. Heme (hemin) importer (TC 3.A.1.14.5) family. The complex is composed of two ATP-binding proteins (HmuV), two transmembrane proteins (HmuU) and a solute-binding protein (HmuT).

The protein resides in the cell inner membrane. In terms of biological role, part of the ABC transporter complex HmuTUV involved in hemin import. Responsible for energy coupling to the transport system. In Hahella chejuensis (strain KCTC 2396), this protein is Hemin import ATP-binding protein HmuV.